Here is a 614-residue protein sequence, read N- to C-terminus: Vitamin B12 transporter BtuB (614 aa).

Residues 1–20 form the signal peptide; that stretch reads MIKKASLLTACSVTAFSAWA. The TonB box motif lies at 26–33; sequence DTLVVTAI. In terms of domain architecture, TBDR plug spans 38-152; that stretch reads PRSTVLAPTT…IGGVVNIITT (115 aa). Residues L83, S85, N92, and 110–111 contribute to the cyanocob(III)alamin site; that span reads VS. The 460-residue stretch at 155–614 folds into the TBDR beta-barrel domain; the sequence is EPGTEISAGW…EYTLSGSYTF (460 aa). A run of 3 beta stranded transmembrane segments spans residues 158 to 165, 169 to 178, and 184 to 195; these read TEISAGWG, YQNYDVSTQQ, and TRVTLLGDYAHT. Residues D199, Q211, D213, and D215 each contribute to the Ca(2+) site. Beta stranded transmembrane passes span 217 to 227 and 232 to 248; these read FLSKTLYGALE and DAWSGFVRGYGYDNRTN. Positions 249 and 250 each coordinate Ca(2+). Cyanocob(III)alamin is bound at residue A251. D261 provides a ligand contact to Ca(2+). The next 14 membrane-spanning stretches (beta stranded) occupy residues 263–277, 279–296, 309–325, 328–337, 353–369, 371–381, 385–400, 403–417, 434–443, 449–458, 473–490, 494–509, 517–529, and 535–550; these read RKLYSQSWDAGLRYN, ELIKSQLITSYSHSKDYN, TLDEMKQYTVQWANNVI, HGSIGAGVDW, YDQRNTGIYLTGLQQVG, FTFEGAARSDD, FGRHGTWQTSAGWEFI, YRFIASYGTSYKAPN, KSKQWEGAFE, VNWRISGYRN, YYNEGKARIKGVEATANF, PLTHTVSYDYVDARNA, RRAKQQVKYQLDW, and DWGITYQYLGTRYDKD. Residue T309 coordinates cyanocob(III)alamin. R517 serves as a coordination point for cyanocob(III)alamin. Y551 contributes to the cyanocob(III)alamin binding site. The next 3 beta stranded transmembrane spans lie at 558-572, 585-596, and 602-614; these read TVKMGGVSLWDLAVA, IANLFDKDYETV, and AGREYTLSGSYTF. Positions 597–614 match the TonB C-terminal box motif; it reads YGYQTAGREYTLSGSYTF.

It belongs to the TonB-dependent receptor family. BtuB (TC 1.B.14.3.1) subfamily.

The protein resides in the cell outer membrane. In terms of biological role, involved in the active translocation of vitamin B12 (cyanocobalamin) across the outer membrane to the periplasmic space. It derives its energy for transport by interacting with the trans-periplasmic membrane protein TonB. This chain is Vitamin B12 transporter BtuB, found in Shigella flexneri serotype 5b (strain 8401).